We begin with the raw amino-acid sequence, 854 residues long: Protein ROOT HAIR DEFECTIVE 3 homolog 1 (854 aa).

The Cytoplasmic portion of the chain corresponds to 1 to 680; that stretch reads MDEAAAAEAV…QAHKRGNGRL (680 aa). Positions 37–252 constitute a GB1/RHD3-type G domain; it reads GLSYAVVSIM…IAPGGLAGDR (216 aa). 47–54 is a binding site for GTP; it reads GPQSSGKS. A coiled-coil region spans residues 217 to 242; the sequence is ALPSFEEKEEQFREQVQQLRQRFSNS. A helical membrane pass occupies residues 681–701; the sequence is PPPWAMVAIAVLGFNEIMTLL. The Lumenal portion of the chain corresponds to 702–704; it reads RNP. A helical transmembrane segment spans residues 705–725; it reads IYLFLLFVGYLLVKALAVQLD. The Cytoplasmic portion of the chain corresponds to 726-854; it reads INREFQNGVV…NESNNAYSIV (129 aa). 2 stretches are compositionally biased toward low complexity: residues 758–781 and 814–828; these read TEQQ…QQQP and VSPS…VTSP. The tract at residues 758–854 is disordered; it reads TEQQQQQGHH…NESNNAYSIV (97 aa). A compositionally biased stretch (polar residues) spans 842 to 854; that stretch reads QPDNESNNAYSIV.

Belongs to the TRAFAC class dynamin-like GTPase superfamily. GB1/RHD3 GTPase family. RHD3 subfamily.

Its subcellular location is the endoplasmic reticulum membrane. Its function is as follows. Probable GTP-binding protein that may be involved in cell development. This chain is Protein ROOT HAIR DEFECTIVE 3 homolog 1, found in Oryza sativa subsp. japonica (Rice).